Here is a 492-residue protein sequence, read N- to C-terminus: Catalase (492 aa).

Active-site residues include His65 and Asn138. Tyr348 provides a ligand contact to heme.

Belongs to the catalase family. In terms of assembly, homotetramer. The cofactor is heme.

The protein localises to the cytoplasm. Its subcellular location is the cytosol. The protein resides in the peroxisome matrix. The catalysed reaction is 2 H2O2 = O2 + 2 H2O. Its function is as follows. Catalyzes the degradation of hydrogen peroxide (H(2)O(2)) generated by peroxisomal oxidases to water and oxygen, thereby protecting cells from the toxic effects of hydrogen peroxide. The sequence is that of Catalase from Ipomoea batatas (Sweet potato).